A 432-amino-acid polypeptide reads, in one-letter code: Type I restriction enzyme MjaIX specificity subunit (432 aa).

The protein belongs to the type-I restriction system S methylase family. As to quaternary structure, the type I restriction/modification system is composed of three polypeptides R, M and S.

The specificity (S) subunit of a type I restriction enzyme; this subunit dictates DNA sequence specificity. The M and S subunits together form a methyltransferase (MTase) that methylates A-3 on the top and A-2 on the bottom strand of the sequence 5'-CCAN(5)GTR-3'. In the presence of the R subunit the complex can also act as an endonuclease, binding to the same target sequence but cutting the DNA some distance from this site. Whether the DNA is cut or modified depends on the methylation state of the target sequence. When the target site is unmodified, the DNA is cut. When the target site is hemimethylated, the complex acts as a maintenance MTase modifying the DNA so that both strands become methylated. After locating a non-methylated recognition site, the enzyme complex serves as a molecular motor that translocates DNA in an ATP-dependent manner until a collision occurs that triggers cleavage. This chain is Type I restriction enzyme MjaIX specificity subunit (hsdS), found in Methanocaldococcus jannaschii (strain ATCC 43067 / DSM 2661 / JAL-1 / JCM 10045 / NBRC 100440) (Methanococcus jannaschii).